The sequence spans 224 residues: Probable GTP-binding protein EngB (224 aa).

Residues 27–201 (SGIEVAFAGR…DAIICQWLEQ (175 aa)) enclose the EngB-type G domain. GTP-binding positions include 35–42 (GRSNAGKS), 62–66 (GRTQL), 80–83 (DLPG), 147–150 (TKCD), and 180–182 (FSS). Mg(2+) contacts are provided by serine 42 and threonine 64. The segment at 205–224 (EYELPEEDDFDDSDEFTEEE) is disordered.

This sequence belongs to the TRAFAC class TrmE-Era-EngA-EngB-Septin-like GTPase superfamily. EngB GTPase family. Mg(2+) serves as cofactor.

Functionally, necessary for normal cell division and for the maintenance of normal septation. This chain is Probable GTP-binding protein EngB, found in Colwellia psychrerythraea (strain 34H / ATCC BAA-681) (Vibrio psychroerythus).